The chain runs to 409 residues: E3 ubiquitin-protein ligase MARCHF4 (409 aa).

An N-terminal signal peptide occupies residues 1–17; sequence MLMPLGGLLWWWCCCCG. Positions 92–133 are disordered; it reads GPREAVGRETPPLPPPPPLPPSGDDDWDGPATGPPASLLSSA. Pro residues predominate over residues 102–112; the sequence is PPLPPPPPLPP. The RING-CH-type zinc-finger motif lies at 154 to 214; the sequence is DSGMRTPLCR…ELCYYKYHVI (61 aa). The Zn(2+) site is built by cysteine 162, cysteine 165, cysteine 178, cysteine 180, histidine 188, cysteine 191, cysteine 204, and cysteine 207. 2 helical membrane passes run 242–262 and 271–291; these read LGSLFLIASISWLIWSTFSPS and LFQICYGMYGFMDVVCIGLII. Disordered regions lie at residues 323–372 and 389–409; these read EDQK…GPVS and PHDQRSTQGSGRELVMRVTTV. Over residues 328–343 the composition is skewed to polar residues; it reads GGRTNLQTSSSAQANL.

It is found in the golgi apparatus membrane. The enzyme catalyses S-ubiquitinyl-[E2 ubiquitin-conjugating enzyme]-L-cysteine + [acceptor protein]-L-lysine = [E2 ubiquitin-conjugating enzyme]-L-cysteine + N(6)-ubiquitinyl-[acceptor protein]-L-lysine.. Its pathway is protein modification; protein ubiquitination. E3 ubiquitin-protein ligase that may mediate ubiquitination of MHC-I and CD4, and promote their subsequent endocytosis and sorting to lysosomes via multivesicular bodies. E3 ubiquitin ligases accept ubiquitin from an E2 ubiquitin-conjugating enzyme in the form of a thioester and then directly transfer the ubiquitin to targeted substrates. The sequence is that of E3 ubiquitin-protein ligase MARCHF4 (Marchf4) from Mus musculus (Mouse).